We begin with the raw amino-acid sequence, 436 residues long: MRQALPLVTRQGDRIAIVSGLRTPFARQATAFHGIPAVDLGKMVVGELLARSEIPADAIEQLVFGQVVQMPEAPNIAREIVLGTGMNVHTDAYSVSRACATSFQAVANVAESLMAGTIRAGIAGGADSSSVLPIGVSKALARVLVDVNKARTTRQRLTLFSRLRLRDLLPVPPAVAEYSTGLRMGDTAEQMAKTYGITREQQDALAHRSHQRAAQAWAEGKLAEEVMTTYVPPYKNPFAEDNNIRGASTLADYAKLRPAFDRKHGSVTAANSTPLTDGAAAVILMTESRAKELGLRPLGYLRSYAFTAIDVWQDMLLGPAWSTPLALERAGLTMADLTLFDMHEAFAAQTLANLQLLGSERFAREVFGRAQATGEVDDAKFNVLGGSIAYGHPFAATGARMITQTLHELRRRGGGFGLVTACAAGGLGAAMVLEAE.

Residue C99 is the Acyl-thioester intermediate of the active site. Residues H392 and C422 each act as proton acceptor in the active site.

The protein belongs to the thiolase-like superfamily. Thiolase family. In terms of assembly, heterotetramer of two alpha chains (FadJ) and two beta chains (FadI).

Its subcellular location is the cytoplasm. The enzyme catalyses an acyl-CoA + acetyl-CoA = a 3-oxoacyl-CoA + CoA. It participates in lipid metabolism; fatty acid beta-oxidation. Functionally, catalyzes the final step of fatty acid oxidation in which acetyl-CoA is released and the CoA ester of a fatty acid two carbons shorter is formed. This Salmonella typhi protein is 3-ketoacyl-CoA thiolase.